The following is a 317-amino-acid chain: Transcription initiation factor IIB 3 (317 aa).

The span at M1–E14 shows a compositional bias: basic and acidic residues. The tract at residues M1–C25 is disordered. A TFIIB-type zinc finger spans residues E21–E50. Zn(2+) is bound by residues C25, C28, C42, and C45. Positions A62 to H83 are disordered. 2 repeat units span residues S136–L219 and E230–E311.

Belongs to the TFIIB family.

Stabilizes TBP binding to an archaeal box-A promoter. Also responsible for recruiting RNA polymerase II to the pre-initiation complex (DNA-TBP-TFIIB). In Halobacterium salinarum (strain ATCC 700922 / JCM 11081 / NRC-1) (Halobacterium halobium), this protein is Transcription initiation factor IIB 3.